The chain runs to 454 residues: Histidine--tRNA ligase (454 aa).

This sequence belongs to the class-II aminoacyl-tRNA synthetase family. As to quaternary structure, homodimer.

The protein resides in the cytoplasm. The enzyme catalyses tRNA(His) + L-histidine + ATP = L-histidyl-tRNA(His) + AMP + diphosphate + H(+). In Phocaeicola vulgatus (strain ATCC 8482 / DSM 1447 / JCM 5826 / CCUG 4940 / NBRC 14291 / NCTC 11154) (Bacteroides vulgatus), this protein is Histidine--tRNA ligase.